The primary structure comprises 286 residues: 2-hydroxy-6-oxo-6-phenylhexa-2,4-dienoate hydrolase (286 aa).

Substrate is bound by residues 42–43 (GG), Asn-51, Lys-111, Ser-180, and Arg-190. The AB hydrolase-1 domain occupies 173–271 (NVFLFDQSLI…RCVHWAQWEH (99 aa)). The active-site Proton acceptor is His-265. Trp-266 is a binding site for substrate.

It belongs to the AB hydrolase superfamily. BphD family. In terms of assembly, homodimer.

It catalyses the reaction 2,6-dioxo-6-phenylhexa-3-enoate + H2O = 2-oxopent-4-enoate + benzoate + H(+). It participates in xenobiotic degradation; biphenyl degradation; 2-hydroxy-2,4-pentadienoate and benzoate from biphenyl: step 4/4. In terms of biological role, catalyzes an unusual C-C bond hydrolysis of 2-hydroxy-6-oxo-6-phenylhexa-2,4-dienoic acid (HOPDA) to produce benzoic acid and 2-hydroxy-2,4-pentadienoic acid (HPD). The sequence is that of 2-hydroxy-6-oxo-6-phenylhexa-2,4-dienoate hydrolase from Delftia acidovorans (Pseudomonas acidovorans).